Reading from the N-terminus, the 130-residue chain is ATP synthase epsilon chain, chloroplastic (130 aa).

Belongs to the ATPase epsilon chain family. As to quaternary structure, F-type ATPases have 2 components, CF(1) - the catalytic core - and CF(0) - the membrane proton channel. CF(1) has five subunits: alpha(3), beta(3), gamma(1), delta(1), epsilon(1). CF(0) has three main subunits: a, b and c.

It localises to the plastid. It is found in the chloroplast thylakoid membrane. Produces ATP from ADP in the presence of a proton gradient across the membrane. This is ATP synthase epsilon chain, chloroplastic from Tupiella akineta (Green alga).